A 210-amino-acid polypeptide reads, in one-letter code: MLTIALPKGSLLRDSIDRFQQIGLDFSAFLEPKNRQLQILDPTHRAKALLVRAWDVPVYVEYGQAQLGIVGYDILREKKPAVAQLADLNFGGCRLSVAVPQASPYRRSVDLPPHGRVASKFVHCALEHFRRLDLPVEIIPLYGSVELGPITGMSEAIVDLVSTGRTLQENGLMEIEVLFDSSARLIAHPLSYRVNGDRLLDWVEKLRSVI.

It belongs to the ATP phosphoribosyltransferase family. Short subfamily. Heteromultimer composed of HisG and HisZ subunits.

The protein resides in the cytoplasm. It carries out the reaction 1-(5-phospho-beta-D-ribosyl)-ATP + diphosphate = 5-phospho-alpha-D-ribose 1-diphosphate + ATP. Its pathway is amino-acid biosynthesis; L-histidine biosynthesis; L-histidine from 5-phospho-alpha-D-ribose 1-diphosphate: step 1/9. Functionally, catalyzes the condensation of ATP and 5-phosphoribose 1-diphosphate to form N'-(5'-phosphoribosyl)-ATP (PR-ATP). Has a crucial role in the pathway because the rate of histidine biosynthesis seems to be controlled primarily by regulation of HisG enzymatic activity. In Synechocystis sp. (strain ATCC 27184 / PCC 6803 / Kazusa), this protein is ATP phosphoribosyltransferase (hisG).